Here is a 152-residue protein sequence, read N- to C-terminus: Small ribosomal subunit protein uS15 (152 aa).

Residues 1-11 (MAKMHTKRKGK) show a composition bias toward basic residues. The segment at 1–23 (MAKMHTKRKGKSSSTRPIRTDPP) is disordered.

The protein belongs to the universal ribosomal protein uS15 family. As to quaternary structure, part of the 30S ribosomal subunit.

This Methanosarcina acetivorans (strain ATCC 35395 / DSM 2834 / JCM 12185 / C2A) protein is Small ribosomal subunit protein uS15.